A 150-amino-acid polypeptide reads, in one-letter code: Flagellar assembly factor FliW (150 aa).

This sequence belongs to the FliW family. As to quaternary structure, interacts with translational regulator CsrA and flagellin(s).

It is found in the cytoplasm. Functionally, acts as an anti-CsrA protein, binds CsrA and prevents it from repressing translation of its target genes, one of which is flagellin. Binds to flagellin and participates in the assembly of the flagellum. This is Flagellar assembly factor FliW from Thermoanaerobacter pseudethanolicus (strain ATCC 33223 / 39E) (Clostridium thermohydrosulfuricum).